Consider the following 157-residue polypeptide: Ribosome maturation factor RimP (157 aa).

This sequence belongs to the RimP family.

Its subcellular location is the cytoplasm. In terms of biological role, required for maturation of 30S ribosomal subunits. This is Ribosome maturation factor RimP from Thermus thermophilus (strain ATCC BAA-163 / DSM 7039 / HB27).